The sequence spans 63 residues: Chymotrypsin/elastase isoinhibitor 1 (63 aa).

5 disulfide bridges follow: cysteine 5/cysteine 38, cysteine 14/cysteine 33, cysteine 17/cysteine 29, cysteine 21/cysteine 60, and cysteine 40/cysteine 54. A TIL domain is found at 5–60; it reads CGPNEVWTECTGCEMKCGPDENTPCPLMCRRPSCECSPGRGMRRTNDGKCIPASQC.

The protein belongs to the serine protease inhibitor-like (TIL domain-containing) family.

It is found in the secreted. Its function is as follows. Defends the organism against the host's proteinases. The chain is Chymotrypsin/elastase isoinhibitor 1 from Ascaris suum (Pig roundworm).